A 293-amino-acid polypeptide reads, in one-letter code: Acetylglutamate kinase (293 aa).

Residues 68–69, Arg90, and Asn189 contribute to the substrate site; that span reads GG.

This sequence belongs to the acetylglutamate kinase family. ArgB subfamily.

Its subcellular location is the cytoplasm. The catalysed reaction is N-acetyl-L-glutamate + ATP = N-acetyl-L-glutamyl 5-phosphate + ADP. Its pathway is amino-acid biosynthesis; L-arginine biosynthesis; N(2)-acetyl-L-ornithine from L-glutamate: step 2/4. Catalyzes the ATP-dependent phosphorylation of N-acetyl-L-glutamate. The polypeptide is Acetylglutamate kinase (Caldicellulosiruptor saccharolyticus (strain ATCC 43494 / DSM 8903 / Tp8T 6331)).